Here is a 510-residue protein sequence, read N- to C-terminus: uncharacterized protein (510 aa).

The Lumenal portion of the chain corresponds to 1-89 (MTSSLDDIEP…QGQRKKVLLK (89 aa)). A disordered region spans residues 38-76 (AVSQGVPDMDGQTTDSSKDPEPNSEDKKAFPPSSGSFFS). Basic and acidic residues predominate over residues 53-66 (SSKDPEPNSEDKKA). Low complexity predominate over residues 67–76 (FPPSSGSFFS). The chain crosses the membrane as a helical span at residues 90 to 110 (FVFTNCLLAIICFTMFVLFWG). Topologically, residues 111 to 123 (ALYDTSKYLHKVK) are cytoplasmic. A helical transmembrane segment spans residues 124–144 (LLVVIQEPPVVILDNNSSMVV). Over 145-312 (PSISYALPTF…TDRILLAPTQ (168 aa)) the chain is Lumenal. The chain crosses the membrane as a helical span at residues 313–333 (IGVVYCLLLTFFQFLLYGPLH). The Cytoplasmic segment spans residues 334–349 (VEMAKVLRPANGLIYR). The helical transmembrane segment at 350 to 370 (IAMSWFTFFFASLFFCTTTAI) threads the bilayer. Residues 371–381 (FQVDFTKSFGR) are Lumenal-facing. A helical transmembrane segment spans residues 382–402 (GGFVVYWMSTWLFMLAAGGAN). At 403 to 416 (ENAVMLVITLGPQY) the chain is on the cytoplasmic side. The chain crosses the membrane as a helical span at residues 417-437 (LGFWILSFVILNIAPSFFPLA). The Lumenal segment spans residues 438–474 (LNNNVYRYGYMMPVHNVIDIYRVIFFDVTRRKMGRNY). Residues 475 to 495 (GILVALIALNTALLPFVGKYA) form a helical membrane-spanning segment. Residues 496–510 (SRKLKQKALVAAKQS) lie on the Cytoplasmic side of the membrane.

The protein to yeast SNG1.

The protein localises to the endoplasmic reticulum membrane. This is an uncharacterized protein from Saccharomyces cerevisiae (strain ATCC 204508 / S288c) (Baker's yeast).